Here is a 688-residue protein sequence, read N- to C-terminus: Glycine--tRNA ligase beta subunit (688 aa).

This sequence belongs to the class-II aminoacyl-tRNA synthetase family. In terms of assembly, tetramer of two alpha and two beta subunits.

It is found in the cytoplasm. It carries out the reaction tRNA(Gly) + glycine + ATP = glycyl-tRNA(Gly) + AMP + diphosphate. This chain is Glycine--tRNA ligase beta subunit, found in Aliivibrio fischeri (strain MJ11) (Vibrio fischeri).